A 326-amino-acid chain; its full sequence is tRNA-modifying protein YgfZ (326 aa).

Positions 27 and 189 each coordinate folate.

It belongs to the tRNA-modifying YgfZ family.

The protein localises to the cytoplasm. Its function is as follows. Folate-binding protein involved in regulating the level of ATP-DnaA and in the modification of some tRNAs. It is probably a key factor in regulatory networks that act via tRNA modification, such as initiation of chromosomal replication. This chain is tRNA-modifying protein YgfZ, found in Shigella sonnei (strain Ss046).